The sequence spans 489 residues: MASISSLGAGSGMDLGSLLDKLQAAEKKRLEPLAQQQTSYKAKLTGFGTLKGSLEKLKSASEELKKFDKLNTTKTNGDHKTFTPSTDSKASPGNYEIEVQQLAKAQSLQSTEVSGVKKLLGEQGKGTRTIIITQPGEKEPMKISLKDDETSLVEIRDAINKKEGNVNASIIKADENGTEEEGKSYLILTSKKAGTRSIMTIKVEGDDELGKLLNYTSDGKGGGSGAMTQKVGAANAKLTVNGIPIERQTNEIKDAPEGIILNLKKVSETEEVIVKVNGEDKKIPRPKTEILVVSRDIEPMKEAIKKWVDSYNELQTTFDSLAKFKPVGKGEAASKDNGALLGDGTLKGIQSQLRHQLFAAQDVADIATLNKLGIKQKLDGTLEISDEKLEKNLKEKSADVKAFFMGDGAKPGSTQTYNLLKETLDGHEGTIATATEGINKRLKTLERQVEQTNRNIDATMERYKRQFTELDKLVNSLNNTSSSLFQLLR.

The span at 70-81 (LNTTKTNGDHKT) shows a compositional bias: basic and acidic residues. The disordered stretch occupies residues 70–92 (LNTTKTNGDHKTFTPSTDSKASP). The span at 82-91 (FTPSTDSKAS) shows a compositional bias: polar residues. Residues 430-480 (TIATATEGINKRLKTLERQVEQTNRNIDATMERYKRQFTELDKLVNSLNNT) adopt a coiled-coil conformation.

It belongs to the FliD family. In terms of assembly, homopentamer.

The protein localises to the secreted. The protein resides in the bacterial flagellum. In terms of biological role, required for the morphogenesis and for the elongation of the flagellar filament by facilitating polymerization of the flagellin monomers at the tip of growing filament. Forms a capping structure, which prevents flagellin subunits (transported through the central channel of the flagellum) from leaking out without polymerization at the distal end. This is Flagellar hook-associated protein 2 (fliD) from Xenorhabdus nematophila (Achromobacter nematophilus).